A 98-amino-acid chain; its full sequence is NADH-ubiquinone oxidoreductase chain 4L (98 aa).

3 helical membrane-spanning segments follow: residues 1–21, 29–49, and 61–81; these read MSLI…GLLM, ALLC…LTIL, and IILL…LVMV.

Belongs to the complex I subunit 4L family. As to quaternary structure, core subunit of respiratory chain NADH dehydrogenase (Complex I) which is composed of 45 different subunits.

The protein localises to the mitochondrion inner membrane. It carries out the reaction a ubiquinone + NADH + 5 H(+)(in) = a ubiquinol + NAD(+) + 4 H(+)(out). Its function is as follows. Core subunit of the mitochondrial membrane respiratory chain NADH dehydrogenase (Complex I) which catalyzes electron transfer from NADH through the respiratory chain, using ubiquinone as an electron acceptor. Part of the enzyme membrane arm which is embedded in the lipid bilayer and involved in proton translocation. The protein is NADH-ubiquinone oxidoreductase chain 4L (MT-ND4L) of Phocoena phocoena (Harbor porpoise).